The chain runs to 706 residues: MPDPATYRPAPGSIPVEPGVYRFRDPHGRVIYVGKAKSLRSRLTSYFADITSLAPRTRQMVMTAGSVEWTVVTTEVEALQLEYNWIKEFDPRFNVRYRDDKSYPVLAVTLNEEYPRLMVYRGPRRKGVRYFGPYSHAWAIRETLDLLTRVFPARTCSAGVFKRHKQIDRPCLLGYIDKCSAPCVGRVSAEQHRQIVLDFCDFLGGKTDRLAKDMEQQMTAAAEQLDFERAARLRDDISALKRALEKQAVVFGDGTDADVVAFADDDLEAAVQVFHVRGGRVRGQRGWIVEKSSEPAATGDADLGQSGQEQLVEQFLTQFYGEQAELGSASDTGGDEATNPVPRQVLVPVLPPNADELATWLSGLRGSRVSLRVPVRGDKRALAETVQRNAQEALAQHKLKRAGDFNARSEALQSIQEALGLADAPLRIECVDISHVQGTDVVASLVVFEDGLPRKSDYRHYAIREAAGDGRSDDVASIAEVTRRRFLRHTSDSQPDPSAEQRPRRFAYPPNLFVVDGGAPQVNAAAAVLEDLGVDDVAVIGLAKRLEEVWVPSEPDPVILPRNSEGLYLLQRVRDEAHRFAISYHRSKRSKRMTASALDSVRGLGEHRRKALVAHFGSVARLKEATVDEITAVPGIGVATARAVQEALGVAPQNGTAPDPAPGTGDPQTPADPHSAATAADIEDDRHATGATGPQMNGSEQQVDRV.

In terms of domain architecture, GIY-YIG spans 16–95; sequence VEPGVYRFRD…IKEFDPRFNV (80 aa). The region spanning 208–243 is the UVR domain; sequence DRLAKDMEQQMTAAAEQLDFERAARLRDDISALKRA. A disordered region spans residues 651-706; it reads APQNGTAPDPAPGTGDPQTPADPHSAATAADIEDDRHATGATGPQMNGSEQQVDRV. A compositionally biased stretch (polar residues) spans 692-706; that stretch reads TGPQMNGSEQQVDRV.

This sequence belongs to the UvrC family. In terms of assembly, interacts with UvrB in an incision complex.

The protein localises to the cytoplasm. The UvrABC repair system catalyzes the recognition and processing of DNA lesions. UvrC both incises the 5' and 3' sides of the lesion. The N-terminal half is responsible for the 3' incision and the C-terminal half is responsible for the 5' incision. The chain is UvrABC system protein C from Mycolicibacterium smegmatis (strain ATCC 700084 / mc(2)155) (Mycobacterium smegmatis).